The primary structure comprises 397 residues: Ribosomal RNA large subunit methyltransferase I (397 aa).

Residues 2–82 (TTSIYLVKGR…EVINVDFFVK (81 aa)) enclose the PUA domain.

This sequence belongs to the methyltransferase superfamily. RlmI family.

The protein resides in the cytoplasm. It carries out the reaction cytidine(1962) in 23S rRNA + S-adenosyl-L-methionine = 5-methylcytidine(1962) in 23S rRNA + S-adenosyl-L-homocysteine + H(+). Its function is as follows. Specifically methylates the cytosine at position 1962 (m5C1962) of 23S rRNA. The chain is Ribosomal RNA large subunit methyltransferase I from Photobacterium profundum (strain SS9).